The primary structure comprises 143 residues: KESAAAKFRRQHMDSGSSSSGNSNYCNLMMKRRRMTHGRCKPVNTFVHESLDDVKAVCSQKNITCKNGQPNCYQSNSTMNITDCRETGGSKYPNCAYKTSQKQKYITVACEGNPYVPVHFDGAVLLPATPLPSLPPPHKRRLL.

The interval 1 to 21 (KESAAAKFRRQHMDSGSSSSG) is disordered. 2 residues coordinate substrate: Lys7 and Arg10. The active-site Proton acceptor is His12. Intrachain disulfides connect Cys26/Cys84, Cys40/Cys95, Cys58/Cys110, and Cys65/Cys72. 41–45 (KPVNT) contributes to the substrate binding site. Asn62 is a glycosylation site (N-linked (GlcNAc...) asparagine). Residues Lys66 and Arg85 each coordinate substrate. His119 acts as the Proton donor in catalysis. O-linked (GalNAc...) threonine glycosylation occurs at Thr129. Ser133 carries O-linked (GalNAc...) serine glycosylation.

It belongs to the pancreatic ribonuclease family.

The protein localises to the secreted. This chain is Brain ribonuclease (BRN), found in Ovis aries (Sheep).